Here is a 49-residue protein sequence, read N- to C-terminus: Toxic protein HokB (49 aa).

Residues 4 to 24 form a helical membrane-spanning segment; it reads NPLVVCLLIICITILTFTLLT.

Belongs to the Hok/Gef family.

The protein localises to the cell inner membrane. In terms of biological role, toxic component of a type I toxin-antitoxin (TA) system. When overexpressed kills cells within minutes; causes collapse of the transmembrane potential and arrest of respiration. Expression leads to membrane depolarization; when protein levels are high enough depolarization probably leads to lowered metabolic activity which in turn induces some cells to enter the persistent state in which they transiently survive antibiotic exposure. Its toxic effect is probably neutralized by antisense antitoxin RNA SokB, which is encoded in trans on the opposite DNA strand. This Escherichia coli (strain K12) protein is Toxic protein HokB.